The chain runs to 156 residues: B3 domain-containing protein At5g26805 (156 aa).

A DNA-binding region (TF-B3) is located at residues 57–155; sequence KFQLPMEKIR…MFCFSVLDGR (99 aa).

It localises to the nucleus. The polypeptide is B3 domain-containing protein At5g26805 (Arabidopsis thaliana (Mouse-ear cress)).